We begin with the raw amino-acid sequence, 350 residues long: tRNA pseudouridine synthase D (350 aa).

Aspartate 85 functions as the Nucleophile in the catalytic mechanism. One can recognise a TRUD domain in the interval 160-310 (GVINYFGEQR…EAARRTILLR (151 aa)).

This sequence belongs to the pseudouridine synthase TruD family.

The enzyme catalyses uridine(13) in tRNA = pseudouridine(13) in tRNA. Responsible for synthesis of pseudouridine from uracil-13 in transfer RNAs. In Idiomarina loihiensis (strain ATCC BAA-735 / DSM 15497 / L2-TR), this protein is tRNA pseudouridine synthase D.